Reading from the N-terminus, the 874-residue chain is Valine--tRNA ligase (874 aa).

A 'HIGH' region motif is present at residues 51–61 (PNVTGVLHIGH). The 'KMSKS' region signature appears at 533–537 (KMSKS). An ATP-binding site is contributed by Lys-536. The stretch at 813-873 (LVARLKKQLE…IKQELDLLEQ (61 aa)) forms a coiled coil.

Belongs to the class-I aminoacyl-tRNA synthetase family. ValS type 1 subfamily. As to quaternary structure, monomer.

It is found in the cytoplasm. The enzyme catalyses tRNA(Val) + L-valine + ATP = L-valyl-tRNA(Val) + AMP + diphosphate. Functionally, catalyzes the attachment of valine to tRNA(Val). As ValRS can inadvertently accommodate and process structurally similar amino acids such as threonine, to avoid such errors, it has a 'posttransfer' editing activity that hydrolyzes mischarged Thr-tRNA(Val) in a tRNA-dependent manner. This Helicobacter pylori (strain ATCC 700392 / 26695) (Campylobacter pylori) protein is Valine--tRNA ligase.